The sequence spans 210 residues: Redox-sensing transcriptional repressor Rex (210 aa).

A DNA-binding region (H-T-H motif) is located at residues Lys17 to Phe56. Gly91–Gly96 is an NAD(+) binding site.

The protein belongs to the transcriptional regulatory Rex family. Homodimer.

Its subcellular location is the cytoplasm. In terms of biological role, modulates transcription in response to changes in cellular NADH/NAD(+) redox state. The protein is Redox-sensing transcriptional repressor Rex of Clostridioides difficile (strain 630) (Peptoclostridium difficile).